The primary structure comprises 466 residues: Purple acid phosphatase 6 (466 aa).

The N-terminal stretch at 1–20 (MKNLVIFAFLFLSITTVING) is a signal peptide. N-linked (GlcNAc...) asparagine glycosylation occurs at Asn-88. A Fe cation-binding site is contributed by Asp-164. The N-linked (GlcNAc...) asparagine glycan is linked to Asn-172. Asp-192 and Tyr-195 together coordinate Fe cation. Asp-192 is a Zn(2+) binding site. Asn-229 and His-314 together coordinate Zn(2+). Asn-229 provides a ligand contact to substrate. His-324 functions as the Proton donor in the catalytic mechanism. His-351 is a Zn(2+) binding site. 351–353 (HVH) contacts substrate. Residue His-353 coordinates Fe cation. N-linked (GlcNAc...) asparagine glycosylation is found at Asn-367 and Asn-424.

This sequence belongs to the metallophosphoesterase superfamily. Purple acid phosphatase family. In terms of assembly, homodimer. Requires Fe cation as cofactor. The cofactor is Zn(2+). As to expression, specifically expressed in flowers.

The protein localises to the secreted. The catalysed reaction is a phosphate monoester + H2O = an alcohol + phosphate. The protein is Purple acid phosphatase 6 (PAP6) of Arabidopsis thaliana (Mouse-ear cress).